The sequence spans 147 residues: 2-amino-4-hydroxy-6-hydroxymethyldihydropteridine pyrophosphokinase (147 aa).

This sequence belongs to the HPPK family.

The catalysed reaction is 6-hydroxymethyl-7,8-dihydropterin + ATP = (7,8-dihydropterin-6-yl)methyl diphosphate + AMP + H(+). Its pathway is cofactor biosynthesis; tetrahydrofolate biosynthesis; 2-amino-4-hydroxy-6-hydroxymethyl-7,8-dihydropteridine diphosphate from 7,8-dihydroneopterin triphosphate: step 4/4. In terms of biological role, catalyzes the transfer of pyrophosphate from adenosine triphosphate (ATP) to 6-hydroxymethyl-7,8-dihydropterin, an enzymatic step in folate biosynthesis pathway. This is 2-amino-4-hydroxy-6-hydroxymethyldihydropteridine pyrophosphokinase (folK) from Porphyromonas gingivalis (strain ATCC 33277 / DSM 20709 / CIP 103683 / JCM 12257 / NCTC 11834 / 2561).